The sequence spans 255 residues: Small ribosomal subunit protein uS2 (255 aa).

Residues 232–255 (ASGRDLGASEEVPVEPALEEASEA) form a disordered region.

It belongs to the universal ribosomal protein uS2 family.

This chain is Small ribosomal subunit protein uS2, found in Rhizobium meliloti (strain 1021) (Ensifer meliloti).